We begin with the raw amino-acid sequence, 167 residues long: Neutrophilic granule protein (167 aa).

Positions Met-1–Ala-21 are cleaved as a signal peptide. The interval Glu-122–Phe-141 is disordered.

It belongs to the cathelicidin family. As to quaternary structure, monomer. Homodimer; disulfide-linked. As to expression, expressed in myeloid bone marrow cells. Expressed in neutrophilic precursors (at protein level). Expressed in myeloid bone marrow cells.

It localises to the secreted. It is found in the cytoplasmic granule. In terms of biological role, acts as an inhibitor of cathepsin B (CTSB) activity. Plays a role as a negative regulator of tumor vascular development, cell invasion and metastasis. The protein is Neutrophilic granule protein of Mus musculus (Mouse).